Consider the following 338-residue polypeptide: Tryptophan--tRNA ligase (338 aa).

Residues 18–20 and 26–27 contribute to the ATP site; these read QPS and GN. Positions 19 to 27 match the 'HIGH' region motif; it reads PSGNLTIGN. D142 contributes to the L-tryptophan binding site. ATP-binding positions include 154–156, I193, and 202–206; these read GND and KMSKS. The short motif at 202-206 is the 'KMSKS' region element; that stretch reads KMSKS.

It belongs to the class-I aminoacyl-tRNA synthetase family. Homodimer.

The protein resides in the cytoplasm. The enzyme catalyses tRNA(Trp) + L-tryptophan + ATP = L-tryptophyl-tRNA(Trp) + AMP + diphosphate + H(+). Functionally, catalyzes the attachment of tryptophan to tRNA(Trp). The protein is Tryptophan--tRNA ligase of Clostridium tetani (strain Massachusetts / E88).